Here is a 375-residue protein sequence, read N- to C-terminus: 23S rRNA (uracil(747)-C(5))-methyltransferase RlmC (375 aa).

[4Fe-4S] cluster-binding residues include C3, C11, C14, and C87. The S-adenosyl-L-methionine site is built by Q212, F241, E262, and N307. C334 serves as the catalytic Nucleophile.

It belongs to the class I-like SAM-binding methyltransferase superfamily. RNA M5U methyltransferase family. RlmC subfamily.

It catalyses the reaction uridine(747) in 23S rRNA + S-adenosyl-L-methionine = 5-methyluridine(747) in 23S rRNA + S-adenosyl-L-homocysteine + H(+). Catalyzes the formation of 5-methyl-uridine at position 747 (m5U747) in 23S rRNA. In Shigella sonnei (strain Ss046), this protein is 23S rRNA (uracil(747)-C(5))-methyltransferase RlmC.